Here is a 364-residue protein sequence, read N- to C-terminus: Coproporphyrin III ferrochelatase (364 aa).

2 residues coordinate Fe-coproporphyrin III: R29 and Y118. Residues H169 and E250 each coordinate Fe(2+).

The protein belongs to the ferrochelatase family.

The protein localises to the cytoplasm. It catalyses the reaction Fe-coproporphyrin III + 2 H(+) = coproporphyrin III + Fe(2+). It participates in porphyrin-containing compound metabolism; protoheme biosynthesis. Functionally, involved in coproporphyrin-dependent heme b biosynthesis. Catalyzes the insertion of ferrous iron into coproporphyrin III to form Fe-coproporphyrin III. In Streptococcus pneumoniae (strain 70585), this protein is Coproporphyrin III ferrochelatase.